The chain runs to 1434 residues: Protein patched homolog 1 (1434 aa).

Positions 1–13 (MASAGNAAGALGR) are enriched in low complexity. A disordered region spans residues 1-34 (MASAGNAAGALGRQAGGGRRRRTGGPHRAAPDRD). Over 1-86 (MASAGNAAGA…GCYIQKNCGK (86 aa)) the chain is Cytoplasmic. The helical transmembrane segment at 87-107 (FLVVGLLIFGAFAVGLKAANL) threads the bilayer. The Extracellular segment spans residues 108-422 (ETNVEELWVE…LDDILKSFSD (315 aa)). N-linked (GlcNAc...) asparagine glycans are attached at residues Asn127, Asn298, Asn335, and Asn400. A helical transmembrane segment spans residues 423–443 (VSVIRVASGYLLMLAYACLTM). In terms of domain architecture, SSD spans 424-584 (SVIRVASGYL…LLIFPAILSM (161 aa)). The Cytoplasmic portion of the chain corresponds to 444 to 458 (LRWDCSKSQGAVGLA). A helical transmembrane segment spans residues 459 to 479 (GVLLVALSVAAGLGLCSLIGI). At 480–487 (SFNAATTQ) the chain is on the extracellular side. A helical transmembrane segment spans residues 488–508 (VLPFLALGVGVDDVFLLAHAF). Topologically, residues 509 to 533 (SETGQNKRIPFEDRTGECLKRTGAS) are cytoplasmic. A helical transmembrane segment spans residues 534–554 (VALTSISNVTAFFMAALIPIP). Over 555–563 (ALRAFSLQA) the chain is Extracellular. A helical transmembrane segment spans residues 564–584 (AVVVVFNFAMVLLIFPAILSM). Topologically, residues 585–734 (DLYRREDRRL…HYAPFLLKPK (150 aa)) are cytoplasmic. Residues 735 to 755 (AKVVVILLFLGLLGVSLYGTT) form a helical membrane-spanning segment. The Extracellular portion of the chain corresponds to 756–1013 (RVRDGLDLTD…WEQYISLRHW (258 aa)). Asn861 and Asn986 each carry an N-linked (GlcNAc...) asparagine glycan. Residues 1014-1034 (LLLSISVVLACTFLVCAVFLL) form a helical membrane-spanning segment. At 1035 to 1039 (NPWTA) the chain is on the cytoplasmic side. Residues 1040 to 1060 (GIIVMVLALMTVELFGMMGLI) traverse the membrane as a helical segment. Residues 1061–1069 (GIKLSAVPV) are Extracellular-facing. Residues 1070–1090 (VILIASVGIGVEFTVHVALAF) form a helical membrane-spanning segment. At 1091–1107 (LTAIGDKNHRAMLALEH) the chain is on the cytoplasmic side. Residues 1108–1128 (MFAPVLDGAVSTLLGVLMLAG) form a helical membrane-spanning segment. The Extracellular portion of the chain corresponds to 1129–1140 (SEFDFIVRYFFA). Residues 1141 to 1161 (VLAILTVLGVLNGLVLLPVLL) traverse the membrane as a helical segment. Topologically, residues 1162–1434 (SFFGPCPEVS…EERPWGSSSN (273 aa)) are cytoplasmic. 3 disordered regions span residues 1175–1219 (GLNR…TVSG), 1257–1348 (HPDS…SSVP), and 1368–1396 (HPPPGPGRNPRGGPCPGYESYPETDHGVF). Thr1181 carries the phosphothreonine modification. Phosphoserine is present on Ser1183. Residues 1204–1213 (SDSSDSEYSS) are compositionally biased toward low complexity. Residues 1288-1297 (PRRDPPREGL) are compositionally biased toward basic and acidic residues. The span at 1335–1348 (PRNPTSTAMGSSVP) shows a compositional bias: polar residues. Lys1413 is covalently cross-linked (Glycyl lysine isopeptide (Lys-Gly) (interchain with G-Cter in ubiquitin)).

It belongs to the patched family. Interacts with SNX17. Interacts with IHH. Interacts with G-protein coupled receptor GPR37L1. Post-translationally, glycosylation is necessary for SHH binding. In terms of processing, in the absence of Hh ligands, ubiquitination by ITCH at Lys-1413 promotes endocytosis and both proteasomal and lysosomal degradation. Detected in cerebellar Bergmann glia cells (at protein level). In the developing embryo, first detected within the ventral neural tube and later in the somites and limb buds. Expression in the limb buds is restricted to the posterior ectoderm surrounding the zone of polarizing activity. In the adult, expression is seen in brain, lung, liver, kidney and ocular tissues; lower levels in heart, skeletal muscle, and testis.

The protein localises to the cell membrane. Its function is as follows. Acts as a receptor for sonic hedgehog (SHH), indian hedgehog (IHH) and desert hedgehog (DHH). Associates with the smoothened protein (SMO) to transduce the hedgehog's proteins signal. Seems to have a tumor suppressor function, as inactivation of this protein is probably a necessary, if not sufficient step for tumorigenesis. In Mus musculus (Mouse), this protein is Protein patched homolog 1 (Ptch1).